Reading from the N-terminus, the 85-residue chain is Small ribosomal subunit protein uS17 (85 aa).

Belongs to the universal ribosomal protein uS17 family. As to quaternary structure, part of the 30S ribosomal subunit.

In terms of biological role, one of the primary rRNA binding proteins, it binds specifically to the 5'-end of 16S ribosomal RNA. This is Small ribosomal subunit protein uS17 from Aggregatibacter actinomycetemcomitans (Actinobacillus actinomycetemcomitans).